The following is a 310-amino-acid chain: Porphobilinogen deaminase (310 aa).

S-(dipyrrolylmethanemethyl)cysteine is present on C241.

It belongs to the HMBS family. In terms of assembly, monomer. It depends on dipyrromethane as a cofactor.

It carries out the reaction 4 porphobilinogen + H2O = hydroxymethylbilane + 4 NH4(+). It functions in the pathway porphyrin-containing compound metabolism; protoporphyrin-IX biosynthesis; coproporphyrinogen-III from 5-aminolevulinate: step 2/4. In terms of biological role, tetrapolymerization of the monopyrrole PBG into the hydroxymethylbilane pre-uroporphyrinogen in several discrete steps. This chain is Porphobilinogen deaminase, found in Lysinibacillus sphaericus (strain C3-41).